The following is a 485-amino-acid chain: Glycogen synthase (485 aa).

Lys15 contacts ADP-alpha-D-glucose.

Belongs to the glycosyltransferase 1 family. Bacterial/plant glycogen synthase subfamily.

It carries out the reaction [(1-&gt;4)-alpha-D-glucosyl](n) + ADP-alpha-D-glucose = [(1-&gt;4)-alpha-D-glucosyl](n+1) + ADP + H(+). The protein operates within glycan biosynthesis; glycogen biosynthesis. In terms of biological role, synthesizes alpha-1,4-glucan chains using ADP-glucose. The sequence is that of Glycogen synthase from Francisella philomiragia subsp. philomiragia (strain ATCC 25017 / CCUG 19701 / FSC 153 / O#319-036).